A 159-amino-acid polypeptide reads, in one-letter code: Adult-specific rigid cuticular protein 15.7 (159 aa).

The region spanning 23–89 (LGNYAFNYGI…SIKTNEPGTA (67 aa)) is the Chitin-binding type R&amp;R domain.

Component of the rigid cuticle of the spider. This is Adult-specific rigid cuticular protein 15.7 from Araneus diadematus (European garden spider).